Consider the following 1531-residue polypeptide: Lysophospholipase nte1 (1531 aa).

At 1-72 (MATGDGIIAA…TPPAPSTMVG (72 aa)) the chain is on the cytoplasmic side. Residues 73–93 (WIGWIFSFIFQVIPSVLYWIV) form a helical membrane-spanning segment. Over 94–115 (TFTTITLPTWLFTLFSMSLTFT) the chain is Lumenal. A helical membrane pass occupies residues 116 to 136 (MNFTTLLLIALAVVSTISWFI). Residues 137 to 1531 (RYRFLNMYSR…RTLAPRRASI (1395 aa)) lie on the Cytoplasmic side of the membrane. 3 disordered regions span residues 242-265 (GSDEELNRMAGESSDEDDHRPDGR), 303-385 (ASSA…TRRK), and 766-789 (NTSSSRVSGSAAAANDPRRKKQSR). The segment covering 325-343 (REMDDSPHVYQGDRLDPAS) has biased composition (basic and acidic residues). Residues 689 to 809 (GGTS…AVAS) and 849 to 969 (RLTS…IAQR) each bind a nucleoside 3',5'-cyclic phosphate. Positions 768-779 (SSSRVSGSAAAA) are enriched in low complexity. The PNPLA domain occupies 1228–1392 (LVLGGGGARG…IDNLTVDHMK (165 aa)). Positions 1232-1237 (GGGARG) match the GXGXXG motif. Residues 1259–1263 (GTSIG) carry the GXSXG motif. Ser-1261 (nucleophile) is an active-site residue. Asp-1379 serves as the catalytic Proton acceptor. Positions 1379–1381 (DGG) match the DGA/G motif. The segment at 1510-1531 (LPEETEEKKKLQRTLAPRRASI) is disordered.

Belongs to the NTE family.

The protein resides in the endoplasmic reticulum membrane. The catalysed reaction is a 1-acyl-sn-glycero-3-phosphocholine + H2O = sn-glycerol 3-phosphocholine + a fatty acid + H(+). Its activity is regulated as follows. Inhibited by organophosphorus esters. Intracellular phospholipase B that catalyzes the double deacylation of phosphatidylcholine (PC) to glycerophosphocholine (GroPCho). Plays an important role in membrane lipid homeostasis. Responsible for the rapid PC turnover in response to inositol, elevated temperatures, or when choline is present in the growth medium. In Aspergillus niger (strain ATCC MYA-4892 / CBS 513.88 / FGSC A1513), this protein is Lysophospholipase nte1 (nte1).